A 208-amino-acid chain; its full sequence is Adult-specific cuticular protein ACP-20 (208 aa).

Residues 1–17 (MLVQITALAFLAGIASA) form the signal peptide. Residues 34-43 (GLGGGLGGVG) form repeat 1. The interval 34 to 180 (GLGGGLGGVG…GLGGGLGGVG (147 aa)) is 2 X 10 AA repeats. The Chitin-binding type R&amp;R domain maps to 64-135 (PAHYQFKYGV…VGHAVHPQVL (72 aa)). Repeat 2 spans residues 171–180 (GLGGGLGGVG).

Epidermal regions synthesizing hard cuticle.

In terms of biological role, cuticular proteins play a significant role in determining the physical properties of cuticles. This Tenebrio molitor (Yellow mealworm beetle) protein is Adult-specific cuticular protein ACP-20 (ACP20).